A 701-amino-acid polypeptide reads, in one-letter code: Polyribonucleotide nucleotidyltransferase (701 aa).

2 residues coordinate Mg(2+): aspartate 485 and aspartate 491. The region spanning 552-611 is the KH domain; the sequence is PKIFKTTVDPEKIRDIIGPGGKMINKIIAKTNVKIDIEPDGRIFVAAPDDISGNRAISMI. The S1 motif domain occupies 621–689; the sequence is GQFFLGKVTR…RLGRIALSRK (69 aa).

The protein belongs to the polyribonucleotide nucleotidyltransferase family. Mg(2+) serves as cofactor.

The protein localises to the cytoplasm. The catalysed reaction is RNA(n+1) + phosphate = RNA(n) + a ribonucleoside 5'-diphosphate. Involved in mRNA degradation. Catalyzes the phosphorolysis of single-stranded polyribonucleotides processively in the 3'- to 5'-direction. The polypeptide is Polyribonucleotide nucleotidyltransferase (Caldicellulosiruptor saccharolyticus (strain ATCC 43494 / DSM 8903 / Tp8T 6331)).